The primary structure comprises 189 residues: Transcription factor FapR (189 aa).

The protein belongs to the FapR family.

Functionally, transcriptional factor involved in regulation of membrane lipid biosynthesis by repressing genes involved in fatty acid and phospholipid metabolism. This is Transcription factor FapR from Exiguobacterium sp. (strain ATCC BAA-1283 / AT1b).